Consider the following 993-residue polypeptide: MLLFKFNFTTAFLFTILAFAQARSHSSSSSSTSKSSASHHSSINSTSATSVYDFSSLTTPIVPTNGVAQEPTLYESSRGLSCPGYQARNISEYSYGVLAILELAGDACYAYGTDYPYLLLNVSYDTEERVHISISDLNQTQFQLSNRRDVWDAPLFYRSSNFSGNLQYNFSFNTDPFEFWITRIADDQVLFDTRGNPLIFEDQYIELTTNMVEDYNVYGLSGSQQSFRLGNNLTKTFWATGYSDSPEANMYGSHPFYMEQRYIPIGTTNTYTSASHGVLMLSSNGMEVLLRSTYIKYRMIGGIIDLFVYSGSTVSPKYTIQQYVQSIGTPTMQPYWSLGFQMSRWGYKTLSDLINMRSYLNASNIPTEGFWNDIDYMSEFRTFTVNSTAFPPNQTLDFFRSLDESHQHYVPVLDPAIYAANPNKSADRTYYPYYSGFEDNIFIKNPNGSAYVGMAWPGFVVYPDFTNPAVLQYWKQGILNLSTAFGSNYSYDLPFSGLCLDMNEPTSFCIGSCGSDLLKLNPVHPPFSLPGDVDNKVYSYPEDFNATNTTEYKSVSRASQSQYKATATSEKSHETPSSESLINGKPEFSINYPPYALDTDTETHDLAQFGVSPNATMHGNTLRYNLFNTYGYSESKISFEALNSIQPNIRPFLLSRSTFVGSGRYAAHWLGDNKSQWSDMVSSISSILTFNLLGIPMVGADVCGYNGNTDEELCARWMALGAFLPFYRNHNSLGSIPQEPFRWASVAEASRSAIEIRYSLLPYWYTLMHTASVDGTPMVRPLFFEFPKQISLASVDKQFMIGTALLISPALEPNTTYIQGIIPGDNDTIWYDWYNHSVINHDYDENITMSAPLGYVNIAVRGGNIIPLQQPGYTTYESRNNPYSLLIAMDNNGFASGSLYIDDGISMQTNSSLSVKLNSNSNTITCVVSGTMVSSPSLANITILGLSNPPNTILFNGQQLSDYQYSDQTLSLTNLLDLTVDGAFSKNWTVTWS.

A signal peptide spans Met1–Ser24. 15 N-linked (GlcNAc...) asparagine glycosylation sites follow: Asn7, Asn44, Asn89, Asn121, Asn138, Asn161, Asn169, Asn232, Asn361, Asn386, Asn393, Asn423, Asn447, Asn480, and Asn488. The active site involves Glu504. 3 N-linked (GlcNAc...) asparagine glycosylation sites follow: Asn545, Asn548, and Asn614. Asp672 serves as the catalytic Proton donor. N-linked (GlcNAc...) asparagine glycosylation is found at Asn673, Asn814, Asn826, Asn835, Asn846, Asn910, Asn940, and Asn987.

It belongs to the glycosyl hydrolase 31 family.

This is an uncharacterized protein from Schizosaccharomyces pombe (strain 972 / ATCC 24843) (Fission yeast).